The sequence spans 492 residues: Tumor necrosis factor receptor superfamily member 8 (492 aa).

The N-terminal stretch at 1 to 18 (MSILLKAAGLLFLGMLQA) is a signal peptide. Topologically, residues 19-282 (FPKDRPLDTT…STGTPFLDPG (264 aa)) are extracellular. TNFR-Cys repeat units follow at residues 57–104 (PCPQ…PRIC) and 105–141 (ECQP…NTIC). 4 disulfide bridges follow: cysteine 58–cysteine 80, cysteine 83–cysteine 96, cysteine 86–cysteine 104, and cysteine 123–cysteine 141. Residues 141-178 (CDLPSPGSGPNGSNPDDCKTLTSHTTPQAIPTLESPAN) are disordered. Low complexity predominate over residues 144-155 (PSPGSGPNGSNP). N-linked (GlcNAc...) asparagine glycosylation is found at asparagine 151, asparagine 178, and asparagine 224. Residues 160–178 (TLTSHTTPQAIPTLESPAN) are compositionally biased toward polar residues. Residues 283 to 303 (SMLFWVAMVVLLVGSASFLLC) form a helical membrane-spanning segment. Over 304–492 (YWKACRRRFQ…DHEPTTVSEK (189 aa)) the chain is Cytoplasmic. Phosphoserine occurs at positions 334 and 348. 2 disordered regions span residues 336–366 (PTEK…PPAV) and 432–492 (PEGR…VSEK). The span at 339–360 (KLTQLQRSGSVTDSSAGHTLSP) shows a compositional bias: polar residues. 2 stretches are compositionally biased toward basic and acidic residues: residues 450 to 459 (EVDHTPHYPE) and 478 to 492 (EGGK…VSEK).

The protein belongs to the TNFR8 family. Interacts with TRAF1, TRAF2, TRAF3 and TRAF5. As to expression, very low level of expression. Detected in spleen, thymus and lung. Highly expressed in HTLV-1 infected T-cell lines.

It localises to the cell membrane. Its function is as follows. Receptor for TNFSF8/CD30L. May play a role in the regulation of cellular growth and transformation of activated lymphoblasts. Regulates gene expression through activation of NF-kappa-B. In Rattus norvegicus (Rat), this protein is Tumor necrosis factor receptor superfamily member 8.